We begin with the raw amino-acid sequence, 506 residues long: MSFSVEVLAGIAIELQRGIGHQDRFQRLITTLRQVLACDASALLRYESRQFIPLAIDGLAQDVLGRRFTLEGHPRLEAIARAGDVVRFPADSDLPDPYDGLIPGQESLKVHACVGLPLFAGQNLIGALTLDAMTPEQFEVFSDEELRLVAALAAGALSNALLIEQLESQNMLPGSSGVFEPIKETHMIGLSPAMTQLKKEIEIVAGSDLNVLIGGETGTGKELVAKAIHQGSPRAVNPLVYLNCAALPESVAESELFGHVKGAFTGAISNRSGKFEMADNGTLFLDEIGELSLALQAKLLRVLQYGDIQRVGDDRSLRVDVRVLAATNRDLREEVLAGRFRADLFHRLSVFPLFVPPLHERGDDVVLLAGYFCEQCRLRLGLSRVVLSPDARRHLLNYGWPGNVRELEHAIHRAVVLARATRAGDEVVLEAQHFALSEDVLPAPPAESFLALPACRNLRESTENFQREMIRQALAQNNHNWAASARALETDVANLHRLAKRLGLKD.

4-aspartylphosphate is present on D57. The Sigma-54 factor interaction domain maps to 187-416 (MIGLSPAMTQ…LEHAIHRAVV (230 aa)). Residues 215 to 222 (GETGTGKE) and 278 to 287 (ADNGTLFLDE) contribute to the ATP site. Positions 481–500 (WAASARALETDVANLHRLAK) form a DNA-binding region, H-T-H motif.

Its pathway is nitrogen metabolism; nitric oxide reduction. In terms of biological role, required for the expression of anaerobic nitric oxide (NO) reductase, acts as a transcriptional activator for at least the norVW operon. Activation also requires sigma-54. This chain is Anaerobic nitric oxide reductase transcription regulator NorR, found in Salmonella heidelberg (strain SL476).